We begin with the raw amino-acid sequence, 366 residues long: uncharacterized protein (366 aa).

A PINc domain is found at 169–280 (ILDTSVIIDG…LNKVCELQKV (112 aa)). Asp-250 contributes to the Mg(2+) binding site. Residues 295 to 356 (VVLPGEEMNV…LQTAAGRMIF (62 aa)) enclose the TRAM domain.

Belongs to the ycf81 family. The protein in the central section; belongs to the PINc/VapC protein family. The cofactor is Mg(2+).

Its function is as follows. An RNase. This is an uncharacterized protein from Bacillus subtilis (strain 168).